A 324-amino-acid polypeptide reads, in one-letter code: Bile salt hydrolase/transferase (324 aa).

Cys-2 acts as the Nucleophile; acyl-thioester intermediate in catalysis. Residues Cys-2 and Arg-16 each coordinate deoxycholate. Asn-79 contacts taurine.

Belongs to the peptidase C59 family. Homotetramer. The tetramer consists of a dimer of dimers.

It catalyses the reaction glycocholate + H2O = cholate + glycine. The catalysed reaction is glycodeoxycholate + H2O = deoxycholate + glycine. The enzyme catalyses chenodeoxycholate + glycine = glycochenodeoxycholate + H2O. It carries out the reaction cholate + taurine = taurocholate + H2O. It catalyses the reaction taurodeoxycholate + H2O = deoxycholate + taurine. The catalysed reaction is taurochenodeoxycholate + H2O = chenodeoxycholate + taurine. The enzyme catalyses an L-alpha-amino acid + cholate = an N-choloyl-L-alpha-amino acid + H2O. It carries out the reaction an L-alpha-amino acid + taurocholate = an N-choloyl-L-alpha-amino acid + taurine. It catalyses the reaction glycocholate + an L-alpha-amino acid = an N-choloyl-L-alpha-amino acid + glycine. It participates in lipid metabolism; bile acid biosynthesis. Functionally, possesses dual functions in bile acid metabolism. Acts as a bile salt hydrolase that catalyzes the deconjugation of glycine- and taurine-linked bile salts, which occurs naturally in the intestines of animals, releasing amino acid residues and deconjugated bile salts (bile acids). Can hydrolyze the amide bond in the bile salts glycocholate (GCA), glycodeoxycholate (GDCA), glycochenodeoxycholate (GCDCA), taurocholate (TCA), taurodeoxycholate (TDCA) and taurochenodeoxycholate (TCDCA). Shows a preference for glycine-conjugated bile acids as substrates. Also acts as an amine N-acyltransferase that conjugates a wide variety of amino acids to conjugated and non-conjugated bile acids, thus producing bacterial bile acid amidates (BBAAs) - also named microbially conjugated bile acids (MCBAs) - in the gastrointestinal tract. These BBAAs may facilitate communication between the microbiota and host through the activation of host ligand-activated transcription factors. In Lactiplantibacillus plantarum (strain ATCC BAA-793 / NCIMB 8826 / WCFS1) (Lactobacillus plantarum), this protein is Bile salt hydrolase/transferase.